The chain runs to 175 residues: ATP-dependent protease subunit HslV (175 aa).

Threonine 2 is a catalytic residue. 3 residues coordinate Na(+): glycine 158, cysteine 161, and threonine 164.

This sequence belongs to the peptidase T1B family. HslV subfamily. In terms of assembly, a double ring-shaped homohexamer of HslV is capped on each side by a ring-shaped HslU homohexamer. The assembly of the HslU/HslV complex is dependent on binding of ATP.

It localises to the cytoplasm. The catalysed reaction is ATP-dependent cleavage of peptide bonds with broad specificity.. Its activity is regulated as follows. Allosterically activated by HslU binding. In terms of biological role, protease subunit of a proteasome-like degradation complex believed to be a general protein degrading machinery. This Haemophilus influenzae (strain 86-028NP) protein is ATP-dependent protease subunit HslV.